The primary structure comprises 458 residues: Transmembrane protein adipocyte-associated 1 homolog (458 aa).

N-linked (GlcNAc...) asparagine glycosylation is found at asparagine 21 and asparagine 45. Helical transmembrane passes span 81-101 (VILV…GSVI), 114-134 (AFTL…AYSM), 152-172 (IIIK…GLLF), 181-201 (ILIA…VQVI), 225-245 (FLFW…IMCL), 263-283 (LIYC…AALI), and 291-311 (LCFV…IIYF). Asparagine 323 and asparagine 324 each carry an N-linked (GlcNAc...) asparagine glycan. The tract at residues 409–458 (RTGSDDYAHHRDSMLSEPSTGTTTRHLKGLGPQGSLVFEDDPSSLTSLRM) is disordered. Residues 411-422 (GSDDYAHHRDSM) show a composition bias toward basic and acidic residues.

It belongs to the UPF0359 family.

It is found in the membrane. The polypeptide is Transmembrane protein adipocyte-associated 1 homolog (tpra-1) (Caenorhabditis elegans).